The chain runs to 114 residues: Thioredoxin H1 (114 aa).

Alanine 2 is subject to N-acetylalanine. Residues 2-114 form the Thioredoxin domain; sequence ASEEGQVIAC…LQSTIAKHLA (113 aa). Catalysis depends on nucleophile residues cysteine 40 and cysteine 43. The cysteines at positions 40 and 43 are disulfide-linked.

Belongs to the thioredoxin family. Plant H-type subfamily. Interacts with FBA6. Interacts with MDH1.

It localises to the cytoplasm. Its function is as follows. Thiol-disulfide oxidoreductase involved in the redox regulation of a number of cytosolic enzymes. Activates the cytosolic malate dehydrogenase (MDH) probably by reducing an interchain disulfide bond of the inactive MDH homodimer. Possesses insulin disulfide bonds reducing activity. The protein is Thioredoxin H1 (TRX1) of Arabidopsis thaliana (Mouse-ear cress).